A 122-amino-acid chain; its full sequence is Glycine cleavage system H protein (122 aa).

The Lipoyl-binding domain occupies 19 to 101 (VATVGITDYA…QGKAWFFKIK (83 aa)). Lysine 60 carries the N6-lipoyllysine modification.

The protein belongs to the GcvH family. The glycine cleavage system is composed of four proteins: P, T, L and H. (R)-lipoate serves as cofactor.

The glycine cleavage system catalyzes the degradation of glycine. The H protein shuttles the methylamine group of glycine from the P protein to the T protein. The polypeptide is Glycine cleavage system H protein (Bradyrhizobium diazoefficiens (strain JCM 10833 / BCRC 13528 / IAM 13628 / NBRC 14792 / USDA 110)).